The primary structure comprises 82 residues: uncharacterized protein (82 aa).

The interval 22 to 82 (LRRSRSSRNG…WPPPCAFTPG (61 aa)) is disordered. The segment covering 47–58 (HRGEPGHPRMEE) has biased composition (basic and acidic residues). Over residues 73 to 82 (WPPPCAFTPG) the composition is skewed to pro residues.

This is an uncharacterized protein from Homo sapiens (Human).